We begin with the raw amino-acid sequence, 416 residues long: Multifunctional CCA protein (416 aa).

ATP is bound by residues Gly-8 and Arg-11. Residues Gly-8 and Arg-11 each contribute to the CTP site. Mg(2+) is bound by residues Glu-21 and Asp-23. ATP contacts are provided by Arg-91, Arg-137, and Arg-140. CTP is bound by residues Arg-91, Arg-137, and Arg-140. The 102-residue stretch at 228–329 (TGIHTLMVLK…LKLFDAVDAW (102 aa)) folds into the HD domain.

It belongs to the tRNA nucleotidyltransferase/poly(A) polymerase family. Bacterial CCA-adding enzyme type 1 subfamily. As to quaternary structure, monomer. Can also form homodimers and oligomers. Mg(2+) is required as a cofactor. Requires Ni(2+) as cofactor.

The catalysed reaction is a tRNA precursor + 2 CTP + ATP = a tRNA with a 3' CCA end + 3 diphosphate. The enzyme catalyses a tRNA with a 3' CCA end + 2 CTP + ATP = a tRNA with a 3' CCACCA end + 3 diphosphate. Functionally, catalyzes the addition and repair of the essential 3'-terminal CCA sequence in tRNAs without using a nucleic acid template. Adds these three nucleotides in the order of C, C, and A to the tRNA nucleotide-73, using CTP and ATP as substrates and producing inorganic pyrophosphate. tRNA 3'-terminal CCA addition is required both for tRNA processing and repair. Also involved in tRNA surveillance by mediating tandem CCA addition to generate a CCACCA at the 3' terminus of unstable tRNAs. While stable tRNAs receive only 3'-terminal CCA, unstable tRNAs are marked with CCACCA and rapidly degraded. This is Multifunctional CCA protein from Photorhabdus laumondii subsp. laumondii (strain DSM 15139 / CIP 105565 / TT01) (Photorhabdus luminescens subsp. laumondii).